The following is a 386-amino-acid chain: bHLH transcription factor RHL1 (386 aa).

Positions Phe119–Ser186 are disordered. The span at Gln127–Gln137 shows a compositional bias: low complexity. Residues Gly138–Thr151 show a composition bias toward polar residues. Residues Gln180–Arg193 are basic motif; degenerate. One can recognise a bHLH domain in the interval Gln180 to Leu229. The segment at Glu194–Leu229 is helix-loop-helix motif.

As to expression, expressed in root epidermal cells.

Its subcellular location is the nucleus. Its function is as follows. Transcription factor that regulates the development of root hairs. The sequence is that of bHLH transcription factor RHL1 from Lotus japonicus (Lotus corniculatus var. japonicus).